Reading from the N-terminus, the 456-residue chain is Transforming growth factor beta-1-induced transcript 1 protein (456 aa).

Met-1 carries the post-translational modification N-acetylmethionine. The interval 1–79 (MEDLDALLSD…ATPPFSSSCG (79 aa)) is disordered. Residues 1-195 (MEDLDALLSD…DTPSPPGPTS (195 aa)) form a transcription activation region. The tract at residues 1-235 (MEDLDALLSD…CNKPIAGQVV (235 aa)) is interaction with PTK2B/PYK2. The short motif at 3-15 (DLDALLSDLETTT) is the LD motif 1 element. Thr-33 is subject to Phosphothreonine. Tyr-55 is subject to Phosphotyrosine. Ser-63 is modified (phosphoserine). Residues 78 to 131 (CGVLGTGLCELDRLLQELNATQFNITDEIMSQFPSSKETAGEQKEDQSEDKKRP) form an interaction with PTK2/FAK1 region. Positions 87–99 (ELDRLLQELNATQ) match the LD motif 2 motif. The disordered stretch occupies residues 109–146 (QFPSSKETAGEQKEDQSEDKKRPSPPPSPSPVLPKPSA). The span at 116–130 (TAGEQKEDQSEDKKR) shows a compositional bias: basic and acidic residues. Phosphoserine is present on residues Ser-132, Ser-136, Ser-138, Ser-159, Ser-181, and Ser-189. The segment covering 132–142 (SPPPSPSPVLP) has biased composition (pro residues). The LD motif 3 signature appears at 152-163 (ELDRLMASLSDF). A disordered region spans residues 166-200 (QNHLPASGPTPPPVPSSMSEDTPSPPGPTSKGSLD). Positions 198–210 (SLDTMLGLLQSDL) match the LD motif 4 motif. 4 LIM zinc-binding domains span residues 221–280 (GLCG…RFSP), 281–338 (RCGL…QLFA), 339–398 (PRCQ…RRGS), and 399–456 (LCAT…KLFG). The residue at position 398 (Ser-398) is a Phosphoserine. Thr-402 bears the Phosphothreonine mark.

It belongs to the paxillin family. Homooligomer. Interacts with CRIP2, HSPB1, ILK, LIMS1, LIMS2, NCK2, NUDT16L1, PAK, PPARG, PTPN12, TCF3, TCF7L2 and VCL. Forms a complex with GIT1 and ARHGEF7. Interacts with AR/androgen receptor in a ligand-dependent manner. Interacts with CSK, LYN, MAPK15, NR3C1, PPARG, PTK2/FAK1, PTK2B/PYK2, SLC6A3, SLC6A4, SMAD3, SRC and talin. Interacts (via LIM zinc-binding domain 2) with CBLC (via RING-type zinc finger); the interaction is direct and enhances CBLC E3 ubiquitin-protein ligase activity. Phosphorylated by gonadotropin-releasing hormone-activated SRC.

It localises to the cell junction. Its subcellular location is the focal adhesion. The protein resides in the nucleus matrix. The protein localises to the cytoplasm. It is found in the cytoskeleton. In terms of biological role, functions as a molecular adapter coordinating multiple protein-protein interactions at the focal adhesion complex and in the nucleus. Links various intracellular signaling modules to plasma membrane receptors and regulates the Wnt and TGFB signaling pathways. May also regulate SLC6A3 and SLC6A4 targeting to the plasma membrane hence regulating their activity. In the nucleus, functions as a nuclear receptor coactivator regulating glucocorticoid, androgen, mineralocorticoid and progesterone receptor transcriptional activity. May play a role in the processes of cell growth, proliferation, migration, differentiation and senescence. May have a zinc-dependent DNA-binding activity. This is Transforming growth factor beta-1-induced transcript 1 protein (TGFB1I1) from Bos taurus (Bovine).